The following is a 282-amino-acid chain: sn-glycerol-3-phosphate transport system permease protein UgpE (282 aa).

A run of 6 helical transmembrane segments spans residues 14-34 (LILILGIIIVAFPIYYTFVAS), 86-106 (MAIAVGKIIISFMSAFAIVFF), 112-132 (MFFFWMIFITLMLPVEVRILP), 146-168 (YAGLTLPLMASATATFLFRQFFL), 201-221 (IAALFVILSIYGWTQYLWPLL), and 248-268 (WNYVMVTAILAIIPPILVVVL). In terms of domain architecture, ABC transmembrane type-1 spans 78-269 (LWNSFVVAMA…IPPILVVVLM (192 aa)).

It belongs to the binding-protein-dependent transport system permease family. The complex is composed of two ATP-binding proteins (UgpC), two transmembrane proteins (UgpA and UgpE) and a solute-binding protein (UgpB).

The protein resides in the cell inner membrane. Functionally, part of the ABC transporter complex UgpBAEC involved in sn-glycerol-3-phosphate (G3P) import. Probably responsible for the translocation of the substrate across the membrane. In Brucella suis biovar 1 (strain 1330), this protein is sn-glycerol-3-phosphate transport system permease protein UgpE (ugpE).